A 286-amino-acid polypeptide reads, in one-letter code: Prohibitin-2, mitochondrial (286 aa).

Residues 1–13 lie on the Mitochondrial matrix side of the membrane; that stretch reads MSFNKVPNIPGAP. A helical; Signal-anchor for type II membrane protein transmembrane segment spans residues 14–32; sequence ALSALLKVSVIGGLGVYAL. The Mitochondrial intermembrane segment spans residues 33-286; sequence TNSLYNVDGG…LQEMNLEPKK (254 aa). Residues 186–219 are a coiled coil; that stretch reads KEFTAAIEAKQVAAQEAERAKFIVEKAEQDRRSA.

The protein belongs to the prohibitin family. As to quaternary structure, component of a prohibitin multimeric complex in mitochondrial membranes. Mostly expressed in proliferative tissues, including vasculature, shoot and root apical tissues.

The protein resides in the mitochondrion inner membrane. In terms of biological role, prohibitin probably acts as a holdase/unfoldase for the stabilization of newly synthesized mitochondrial proteins. The polypeptide is Prohibitin-2, mitochondrial (PHB2) (Arabidopsis thaliana (Mouse-ear cress)).